The primary structure comprises 63 residues: Large ribosomal subunit protein uL29 (63 aa).

It belongs to the universal ribosomal protein uL29 family.

In Serratia proteamaculans (strain 568), this protein is Large ribosomal subunit protein uL29.